We begin with the raw amino-acid sequence, 173 residues long: Alpha-crystallin A chain (173 aa).

The residue at position 1 (methionine 1) is an N-acetylmethionine. The tract at residues 1–63 is required for complex formation with BFSP1 and BFSP2; the sequence is MDVTIQHPWF…RTVLDSGISE (63 aa). Position 6 is a deamidated glutamine; partial (glutamine 6). Phosphoserine is present on serine 45. Position 50 is a deamidated glutamine; partial (glutamine 50). Positions 52 to 162 constitute a sHSP domain; that stretch reads LFRTVLDSGI…GHSERAIPVS (111 aa). The residue at position 70 (lysine 70) is an N6-acetyllysine. A Deamidated glutamine; partial modification is found at glutamine 90. Lysine 99 carries the N6-acetyllysine modification. Histidine 100 is a binding site for Zn(2+). Deamidated asparagine; partial is present on asparagine 101. The Zn(2+) site is built by glutamate 102 and histidine 107. Serine 122 carries the phosphoserine modification. At asparagine 123 the chain carries Deamidated asparagine; partial. Residues 145–173 are disordered; sequence KVQSGLDAGHSERAIPVSREEKPSSAPSS. The residue at position 147 (glutamine 147) is a Deamidated glutamine; partial. The segment covering 153-167 has biased composition (basic and acidic residues); the sequence is GHSERAIPVSREEKP. Histidine 154 lines the Zn(2+) pocket. A glycan (O-linked (GlcNAc) serine) is linked at serine 162.

It belongs to the small heat shock protein (HSP20) family. As to quaternary structure, heteromer composed of three CRYAA and one CRYAB subunits. Inter-subunit bridging via zinc ions enhances stability, which is crucial as there is no protein turn over in the lens. Can also form homodimers and homotetramers (dimers of dimers) which serve as the building blocks of homooligomers. Within homooligomers, the zinc-binding motif is created from residues of 3 different molecules. His-100 and Glu-102 from one molecule are ligands of the zinc ion, and His-107 and His-154 residues from additional molecules complete the site with tetrahedral coordination geometry. Part of a complex required for lens intermediate filament formation composed of BFSP1, BFSP2 and CRYAA. In terms of processing, acetylation at Lys-70 may increase chaperone activity. Post-translationally, undergoes age-dependent proteolytical cleavage at the C-terminus.

The protein localises to the cytoplasm. It localises to the nucleus. Functionally, contributes to the transparency and refractive index of the lens. Acts as a chaperone, preventing aggregation of various proteins under a wide range of stress conditions. Required for the correct formation of lens intermediate filaments as part of a complex composed of BFSP1, BFSP2 and CRYAA. In Cavia porcellus (Guinea pig), this protein is Alpha-crystallin A chain (CRYAA).